Consider the following 158-residue polypeptide: uncharacterized protein (158 aa).

An HTH hxlR-type domain is found at 13–110 (ESVGRALELV…WGDEYLPRPE (98 aa)).

This is an uncharacterized protein from Mycobacterium tuberculosis (strain ATCC 25618 / H37Rv).